Here is an 834-residue protein sequence, read N- to C-terminus: Protein kintoun (834 aa).

Disordered regions lie at residues 214-239, 374-415, 547-669, and 759-834; these read TAEE…KQEP, SRED…SVAP, KGKV…STGR, and KKNQ…EMDD. At S378 the chain carries Phosphoserine. The segment covering 389-398 has biased composition (acidic residues); that stretch reads PVEEDPDGEL. Residues 552-571 show a composition bias toward basic and acidic residues; sequence AKKDNAPLDVKFERNQEGHA. A compositionally biased stretch (acidic residues) spans 582 to 596; sequence EEEEDKENQDQEPES. The segment covering 597-607 has biased composition (low complexity); the sequence is DQQQQQQVQNK. 2 stretches are compositionally biased toward basic residues: residues 608-619 and 759-773; these read KPGKKQRKKNKK and KKNQ…RAQQ. S777 is modified (phosphoserine). The segment covering 785–798 has biased composition (basic and acidic residues); sequence EETRGSALKQEENP.

Belongs to the PIH1 family. Kintoun subfamily. In terms of assembly, interacts with Pp1alpha-96A, Pp1-87B, Pp1-13C and flw.

The protein resides in the cytoplasm. Functionally, required for cytoplasmic pre-assembly of axonemal dyneins, thereby playing a central role in motility in cilia and flagella. Involved in pre-assembly of dynein arm complexes in the cytoplasm before intraflagellar transport loads them for the ciliary compartment. The polypeptide is Protein kintoun (Drosophila melanogaster (Fruit fly)).